The following is a 624-amino-acid chain: Pentatricopeptide repeat-containing protein At4g31070, mitochondrial (624 aa).

A mitochondrion-targeting transit peptide spans 1-15; the sequence is MRWVKLGRRVIMSRA. PPR repeat units lie at residues 56-91, 92-122, 123-157, 158-192, 195-225, 226-260, 261-296, 297-327, 328-362, 363-397, 398-428, 429-463, 464-498, and 499-529; these read FTAI…GADC, DTVV…MLHR, DTVS…GFIP, KSEL…DERM, SVLL…MEVK, NEVS…NLRP, NRVT…GCHA, DERL…SKVR, DVVM…GIEA, NSVT…GFMS, HILL…LTEK, DLVS…GHEV, DDMA…HMPV, and TLEH…MPMK. Positions 534–610 are type E motif; the sequence is IWSSLLSACE…CYGFSKIEPE (77 aa).

The protein belongs to the PPR family. PCMP-E subfamily.

It is found in the mitochondrion. The polypeptide is Pentatricopeptide repeat-containing protein At4g31070, mitochondrial (PCMP-E7) (Arabidopsis thaliana (Mouse-ear cress)).